Reading from the N-terminus, the 260-residue chain is MANFENLSSDFQTIAMDIYSSITQAADLNNNNSNLHFQTFHPSSTSLESLFLHHHQQQLLHFPGNSPDSSNNFSSTSSFLHSDHNIVDETKKRKALLPTLSSSETSGVSDNTNVIATETGSLRRGKRLKKKKEEEDEKEREVVHVRARRGQATDSHSLAERVRRGKINERLRCLQDMVPGCYKAMGMATMLDEIINYVQSLQNQVEFLSMKLTAASSFYDFNSETDAVDSMQRAKARETVEMGRQTRDGSPVFHLSTWSL.

A disordered region spans residues 118-139; it reads ETGSLRRGKRLKKKKEEEDEKE. The 51-residue stretch at 151-201 folds into the bHLH domain; it reads QATDSHSLAERVRRGKINERLRCLQDMVPGCYKAMGMATMLDEIINYVQSL.

The protein resides in the nucleus. Functionally, positive regulator of brassinosteroid signaling. The sequence is that of Transcription factor BEE 1 (BEE1) from Arabidopsis thaliana (Mouse-ear cress).